The primary structure comprises 201 residues: Probable nicotinate-nucleotide adenylyltransferase (201 aa).

Belongs to the NadD family.

It catalyses the reaction nicotinate beta-D-ribonucleotide + ATP + H(+) = deamido-NAD(+) + diphosphate. It participates in cofactor biosynthesis; NAD(+) biosynthesis; deamido-NAD(+) from nicotinate D-ribonucleotide: step 1/1. Functionally, catalyzes the reversible adenylation of nicotinate mononucleotide (NaMN) to nicotinic acid adenine dinucleotide (NaAD). This chain is Probable nicotinate-nucleotide adenylyltransferase, found in Clostridium botulinum (strain Langeland / NCTC 10281 / Type F).